Here is a 225-residue protein sequence, read N- to C-terminus: PKHD-type hydroxylase Smlt1146 (225 aa).

One can recognise a Fe2OG dioxygenase domain in the interval 78-177 (KYLPPRFNRY…RVASFFWVQS (100 aa)). Positions 96, 98, and 158 each coordinate Fe cation. Position 168 (Arg-168) interacts with 2-oxoglutarate.

Fe(2+) is required as a cofactor. It depends on L-ascorbate as a cofactor.

This Stenotrophomonas maltophilia (strain K279a) protein is PKHD-type hydroxylase Smlt1146.